A 382-amino-acid polypeptide reads, in one-letter code: Alkanesulfonate monooxygenase (382 aa).

The protein belongs to the SsuD family.

The catalysed reaction is an alkanesulfonate + FMNH2 + O2 = an aldehyde + FMN + sulfite + H2O + 2 H(+). Its function is as follows. Catalyzes the desulfonation of aliphatic sulfonates. The protein is Alkanesulfonate monooxygenase of Pseudomonas putida (strain GB-1).